The primary structure comprises 284 residues: Bifunctional protein FolD 2 (284 aa).

Residues 166 to 168 and Ile-232 contribute to the NADP(+) site; that span reads GAS.

It belongs to the tetrahydrofolate dehydrogenase/cyclohydrolase family. As to quaternary structure, homodimer.

The catalysed reaction is (6R)-5,10-methylene-5,6,7,8-tetrahydrofolate + NADP(+) = (6R)-5,10-methenyltetrahydrofolate + NADPH. It catalyses the reaction (6R)-5,10-methenyltetrahydrofolate + H2O = (6R)-10-formyltetrahydrofolate + H(+). The protein operates within one-carbon metabolism; tetrahydrofolate interconversion. In terms of biological role, catalyzes the oxidation of 5,10-methylenetetrahydrofolate to 5,10-methenyltetrahydrofolate and then the hydrolysis of 5,10-methenyltetrahydrofolate to 10-formyltetrahydrofolate. This is Bifunctional protein FolD 2 from Pseudomonas putida (strain ATCC 47054 / DSM 6125 / CFBP 8728 / NCIMB 11950 / KT2440).